The sequence spans 475 residues: Isocitrate dehydrogenase [NADP] (475 aa).

NADP(+) is bound at residue T104. Residues S113, N115, R119, R129, and R153 each coordinate D-threo-isocitrate. Residue D362 coordinates Mg(2+). NADP(+) contacts are provided by residues 394-400 (HGTAPKH), N407, Y446, and R450.

The protein belongs to the isocitrate and isopropylmalate dehydrogenases family. As to quaternary structure, homodimer. Mg(2+) is required as a cofactor. Requires Mn(2+) as cofactor.

The protein resides in the cytoplasm. It catalyses the reaction D-threo-isocitrate + NADP(+) = 2-oxoglutarate + CO2 + NADPH. Its activity is regulated as follows. Inhibited non-competitively by ADP and 2-oxoglutarate, with respect to isocitrate and in a competitive manner by NADPH. Catalyzes the oxidative decarboxylation of isocitrate to 2-oxoglutarate and carbon dioxide with the concomitant reduction of NADP(+). Is specific for NADP(+), cannot use NAD(+). The polypeptide is Isocitrate dehydrogenase [NADP] (Synechocystis sp. (strain ATCC 27184 / PCC 6803 / Kazusa)).